A 125-amino-acid polypeptide reads, in one-letter code: Large ribosomal subunit protein bL20 (125 aa).

The protein belongs to the bacterial ribosomal protein bL20 family.

In terms of biological role, binds directly to 23S ribosomal RNA and is necessary for the in vitro assembly process of the 50S ribosomal subunit. It is not involved in the protein synthesizing functions of that subunit. This is Large ribosomal subunit protein bL20 from Methylobacterium nodulans (strain LMG 21967 / CNCM I-2342 / ORS 2060).